A 688-amino-acid polypeptide reads, in one-letter code: Glycine--tRNA ligase beta subunit (688 aa).

Belongs to the class-II aminoacyl-tRNA synthetase family. Tetramer of two alpha and two beta subunits.

The protein localises to the cytoplasm. It catalyses the reaction tRNA(Gly) + glycine + ATP = glycyl-tRNA(Gly) + AMP + diphosphate. This is Glycine--tRNA ligase beta subunit from Geotalea uraniireducens (strain Rf4) (Geobacter uraniireducens).